A 736-amino-acid polypeptide reads, in one-letter code: Zinc finger MYND domain-containing protein 15 (736 aa).

2 disordered regions span residues 70 to 94 (SLGQ…DEPP) and 109 to 192 (LEDG…KNAE). Residues 110–123 (EDGEEGEEEEEDEE) show a composition bias toward acidic residues. 2 stretches are compositionally biased toward basic and acidic residues: residues 124–135 (HGERPGMEKVEP) and 165–185 (ASRE…PEKR). Residues Cys-307, Cys-310, Cys-322, Cys-325, Cys-331, Cys-335, His-349, and Cys-353 each contribute to the Zn(2+) site. The MYND-type zinc-finger motif lies at 307–353 (CHVCHKHSFEVKLTPCPQCSAVLYCGEACLQADWRRCPDDVSHRFWC). Disordered regions lie at residues 556 to 583 (DGPE…GGRR) and 696 to 736 (GGTV…RRRR). A compositionally biased stretch (pro residues) spans 704–718 (GPAPRPPTPAAPPVP). A compositionally biased stretch (basic residues) spans 719-736 (ARRRRGEKKAARGPRRRR).

Interacts with HDAC1, HDAC3, HDAC6 and, to a lesser extent, with HDAC7. In terms of tissue distribution, testis-specific. Expressed in pachytene spermatocytes and all developing spermatids, but not in Sertoli, nor Leydig cells (at protein level).

The protein resides in the nucleus. Its subcellular location is the cytoplasm. Its function is as follows. Acts as a transcriptional repressor through interaction with histone deacetylases (HDACs). May regulate haploid genes important for spermiogenesis. The protein is Zinc finger MYND domain-containing protein 15 (Zmynd15) of Mus musculus (Mouse).